Here is a 1076-residue protein sequence, read N- to C-terminus: Bifunctional glutamine synthetase adenylyltransferase/adenylyl-removing enzyme (1076 aa).

Residues 1 to 521 are adenylyl removase; it reads MESSMFKPSS…LHLDIYYRPM (521 aa). An adenylyl transferase region spans residues 524-1076; it reads VNAQMENDQI…LERNRRRAQR (553 aa). Residues 1041 to 1056 show a composition bias toward low complexity; it reads ATATASAATPQPQTAP. The segment at 1041-1076 is disordered; the sequence is ATATASAATPQPQTAPRPRMHVIAPRLERNRRRAQR.

The protein belongs to the GlnE family. Requires Mg(2+) as cofactor.

The catalysed reaction is [glutamine synthetase]-O(4)-(5'-adenylyl)-L-tyrosine + phosphate = [glutamine synthetase]-L-tyrosine + ADP. The enzyme catalyses [glutamine synthetase]-L-tyrosine + ATP = [glutamine synthetase]-O(4)-(5'-adenylyl)-L-tyrosine + diphosphate. Involved in the regulation of glutamine synthetase GlnA, a key enzyme in the process to assimilate ammonia. When cellular nitrogen levels are high, the C-terminal adenylyl transferase (AT) inactivates GlnA by covalent transfer of an adenylyl group from ATP to specific tyrosine residue of GlnA, thus reducing its activity. Conversely, when nitrogen levels are low, the N-terminal adenylyl removase (AR) activates GlnA by removing the adenylyl group by phosphorolysis, increasing its activity. The regulatory region of GlnE binds the signal transduction protein PII (GlnB) which indicates the nitrogen status of the cell. This chain is Bifunctional glutamine synthetase adenylyltransferase/adenylyl-removing enzyme, found in Bifidobacterium longum subsp. infantis (strain ATCC 15697 / DSM 20088 / JCM 1222 / NCTC 11817 / S12).